The chain runs to 1386 residues: Putative ATP-dependent RNA helicase DHX57 (1386 aa).

A compositionally biased stretch (basic residues) spans 1–11; sequence MSSSVRRKGKP. Disordered regions lie at residues 1–106 and 120–147; these read MSSS…MTSE and EQDA…NDER. 2 stretches are compositionally biased toward gly residues: residues 12–23 and 35–50; these read GKGGGKGSSRGG and GSGG…GGGN. A coiled-coil region spans residues 101–125; sequence LHMTSENQEKVKALLRDLQEQDADA. Phosphoserine occurs at positions 127 and 132. A compositionally biased stretch (acidic residues) spans 133-143; the sequence is GEEEDDEPDCC. The region spanning 180 to 220 is the UBA domain; the sequence is TVSPFAVQKLSRYGFNTERCQAVLRMCDGDVGASLEHLLTQ. Residues 299 to 326 form a C3H1-type zinc finger; that stretch reads ENSLEICKFYLKGNCKFGSKCRFKHEVP. Phosphoserine occurs at positions 475, 477, and 480. The Helicase ATP-binding domain occupies 554-721; sequence LNLLRKHQVV…FNSCPVITIP (168 aa). 567–574 is a binding site for ATP; that stretch reads GMTGCGKT. A DEVH box motif is present at residues 668–671; it reads DEVH. Residues 830–1010 enclose the Helicase C-terminal domain; that stretch reads LIEALLEWIV…QLCLRIKILE (181 aa).

Belongs to the DEAD box helicase family. DEAH subfamily.

The enzyme catalyses ATP + H2O = ADP + phosphate + H(+). Its function is as follows. Probable ATP-binding RNA helicase. This Homo sapiens (Human) protein is Putative ATP-dependent RNA helicase DHX57 (DHX57).